Reading from the N-terminus, the 95-residue chain is UPF0358 protein BCE_3996 (95 aa).

Belongs to the UPF0358 family.

The sequence is that of UPF0358 protein BCE_3996 from Bacillus cereus (strain ATCC 10987 / NRS 248).